A 1892-amino-acid chain; its full sequence is Protein TIC 214 (1892 aa).

The next 6 helical transmembrane spans lie at 12–32 (LISLYMTIINSVVMVGLYYGF), 68–88 (FIAGQLMMFISIYYVPLHLAL), 89–109 (GKPHTITVLALPYLLFHFFWN), 128–148 (LSIQCVFLNNLIIQLFNHFIL), 176–196 (VGWLIGHILLMKWVGLVLVWI), and 225–245 (IFSILLFITCVYYLGRIPSPI). A compositionally biased stretch (acidic residues) spans 256–266 (PEEVGESEEER). The interval 256–299 (PEEVGESEEERNIEIETISEGGGANQKQGTEENTSSSLFSEEEV) is disordered. Over residues 280 to 294 (NQKQGTEENTSSSLF) the composition is skewed to polar residues. A helical membrane pass occupies residues 1115-1135 (FYFFINFFIEKIYMDILLYII). Residues 1613–1636 (SNQEKDVEEDYDKSDKKKRRKKKQ) form a disordered region.

It belongs to the TIC214 family. As to quaternary structure, part of the Tic complex.

The protein resides in the plastid. It localises to the chloroplast inner membrane. In terms of biological role, involved in protein precursor import into chloroplasts. May be part of an intermediate translocation complex acting as a protein-conducting channel at the inner envelope. This Gossypium hirsutum (Upland cotton) protein is Protein TIC 214.